Here is a 337-residue protein sequence, read N- to C-terminus: Protein BIG GRAIN 1-like (337 aa).

Disordered stretches follow at residues 1-32 (MRDM…PSFS), 120-163 (SAAG…RPAS), and 179-233 (KRPS…ARPS). Basic and acidic residues predominate over residues 137–146 (HEQPDVEKTA). 3 stretches are compositionally biased toward low complexity: residues 150–163 (PGSA…RPAS), 195–209 (PACS…SSYA), and 219–230 (RTPPTTTTTARA).

This sequence belongs to the BIG GRAIN 1 (BG1) plant protein family.

Its subcellular location is the cell membrane. Functionally, involved in auxin transport. Regulator of the auxin signaling pathway. The polypeptide is Protein BIG GRAIN 1-like (Oryza sativa subsp. indica (Rice)).